The following is a 443-amino-acid chain: 23S rRNA (uracil(1939)-C(5))-methyltransferase RlmD (443 aa).

A TRAM domain is found at 4–66 (QNRFDRTSFQ…RHFDEARVVE (63 aa)). Positions 79, 85, 88, and 167 each coordinate [4Fe-4S] cluster. Residues glutamine 275, phenylalanine 304, asparagine 309, glutamate 325, aspartate 352, and aspartate 373 each coordinate S-adenosyl-L-methionine. Cysteine 399 functions as the Nucleophile in the catalytic mechanism.

This sequence belongs to the class I-like SAM-binding methyltransferase superfamily. RNA M5U methyltransferase family. RlmD subfamily.

It carries out the reaction uridine(1939) in 23S rRNA + S-adenosyl-L-methionine = 5-methyluridine(1939) in 23S rRNA + S-adenosyl-L-homocysteine + H(+). Functionally, catalyzes the formation of 5-methyl-uridine at position 1939 (m5U1939) in 23S rRNA. The polypeptide is 23S rRNA (uracil(1939)-C(5))-methyltransferase RlmD (Xylella fastidiosa (strain 9a5c)).